Reading from the N-terminus, the 58-residue chain is Succinate dehydrogenase subunit 8B, mitochondrial (58 aa).

In terms of assembly, component of complex II composed of eight subunits in plants: four classical SDH subunits SDH1, SDH2, SDH3 and SDH4 (a flavoprotein (FP), an iron-sulfur protein (IP), and a cytochrome b composed of a large and a small subunit.), as well as four subunits unknown in mitochondria from bacteria and heterotrophic eukaryotes.

The protein localises to the mitochondrion inner membrane. It functions in the pathway carbohydrate metabolism; tricarboxylic acid cycle. This is Succinate dehydrogenase subunit 8B, mitochondrial from Oryza sativa subsp. japonica (Rice).